The following is a 201-amino-acid chain: Adenylyl-sulfate kinase (201 aa).

35–42 (GLSGSGKS) is a binding site for ATP. The Phosphoserine intermediate role is filled by S109.

It belongs to the APS kinase family.

It carries out the reaction adenosine 5'-phosphosulfate + ATP = 3'-phosphoadenylyl sulfate + ADP + H(+). The protein operates within sulfur metabolism; hydrogen sulfide biosynthesis; sulfite from sulfate: step 2/3. Catalyzes the synthesis of activated sulfate. This is Adenylyl-sulfate kinase from Shigella flexneri.